The sequence spans 389 residues: Flap endonuclease 1 (389 aa).

The N-domain stretch occupies residues 1–105 (MGIKGLNKLL…GELAKRKERR (105 aa)). A Mg(2+)-binding site is contributed by aspartate 34. The DNA site is built by arginine 47 and arginine 71. Mg(2+) is bound by residues aspartate 87, glutamate 170, glutamate 172, aspartate 191, and aspartate 193. The I-domain stretch occupies residues 134–265 (DVTRFEKRTV…QTALKLMKEH (132 aa)). Glutamate 170 provides a ligand contact to DNA. DNA-binding residues include glycine 243 and aspartate 245. Mg(2+) is bound at residue aspartate 245. The interval 351-359 (PQARLDGFF) is interaction with PCNA. Residues 360 to 389 (KVMPKEGGEKRKADDKKTKGKKPATKKAKK) are disordered. A compositionally biased stretch (basic and acidic residues) spans 362 to 376 (MPKEGGEKRKADDKK). The span at 377–389 (TKGKKPATKKAKK) shows a compositional bias: basic residues.

It belongs to the XPG/RAD2 endonuclease family. FEN1 subfamily. In terms of assembly, interacts with PCNA. Three molecules of FEN1 bind to one PCNA trimer with each molecule binding to one PCNA monomer. PCNA stimulates the nuclease activity without altering cleavage specificity. Mg(2+) is required as a cofactor. In terms of processing, phosphorylated. Phosphorylation upon DNA damage induces relocalization to the nuclear plasma.

It localises to the nucleus. Its subcellular location is the nucleolus. The protein resides in the nucleoplasm. It is found in the mitochondrion. Structure-specific nuclease with 5'-flap endonuclease and 5'-3' exonuclease activities involved in DNA replication and repair. During DNA replication, cleaves the 5'-overhanging flap structure that is generated by displacement synthesis when DNA polymerase encounters the 5'-end of a downstream Okazaki fragment. It enters the flap from the 5'-end and then tracks to cleave the flap base, leaving a nick for ligation. Also involved in the long patch base excision repair (LP-BER) pathway, by cleaving within the apurinic/apyrimidinic (AP) site-terminated flap. Acts as a genome stabilization factor that prevents flaps from equilibrating into structures that lead to duplications and deletions. Also possesses 5'-3' exonuclease activity on nicked or gapped double-stranded DNA, and exhibits RNase H activity. Also involved in replication and repair of rDNA and in repairing mitochondrial DNA. The protein is Flap endonuclease 1 of Yarrowia lipolytica (strain CLIB 122 / E 150) (Yeast).